The sequence spans 478 residues: DNA-directed RNA polymerase subunit alpha (478 aa).

The segment at 1–341 (MNKKIQDFFL…LDCMRLLNYE (341 aa)) is alpha N-terminal domain (alpha-NTD). The alpha C-terminal domain (alpha-CTD) stretch occupies residues 365-478 (RFYNSREDKT…KLGSRNEKNL (114 aa)).

It belongs to the RNA polymerase alpha chain family. As to quaternary structure, in plastids the minimal PEP RNA polymerase catalytic core is composed of four subunits: alpha, beta, beta', and beta''. When a (nuclear-encoded) sigma factor is associated with the core the holoenzyme is formed, which can initiate transcription.

Its subcellular location is the plastid. It is found in the chloroplast. It catalyses the reaction RNA(n) + a ribonucleoside 5'-triphosphate = RNA(n+1) + diphosphate. DNA-dependent RNA polymerase catalyzes the transcription of DNA into RNA using the four ribonucleoside triphosphates as substrates. This chain is DNA-directed RNA polymerase subunit alpha (rpoA), found in Tetradesmus obliquus (Green alga).